A 298-amino-acid chain; its full sequence is Oxygen-dependent coproporphyrinogen-III oxidase (298 aa).

S92 contributes to the substrate binding site. Residues H96 and H106 each coordinate a divalent metal cation. H106 acts as the Proton donor in catalysis. 108–110 lines the substrate pocket; sequence NVR. The a divalent metal cation site is built by H145 and H175. An important for dimerization region spans residues 239 to 274; that stretch reads YVEFNLVYDRGTLFGLQSGGRSESILMSLPPRVRWE. 257–259 is a binding site for substrate; that stretch reads GGR.

This sequence belongs to the aerobic coproporphyrinogen-III oxidase family. Homodimer. It depends on a divalent metal cation as a cofactor.

The protein resides in the cytoplasm. The enzyme catalyses coproporphyrinogen III + O2 + 2 H(+) = protoporphyrinogen IX + 2 CO2 + 2 H2O. Its pathway is porphyrin-containing compound metabolism; protoporphyrin-IX biosynthesis; protoporphyrinogen-IX from coproporphyrinogen-III (O2 route): step 1/1. Involved in the heme biosynthesis. Catalyzes the aerobic oxidative decarboxylation of propionate groups of rings A and B of coproporphyrinogen-III to yield the vinyl groups in protoporphyrinogen-IX. In Stenotrophomonas maltophilia (strain K279a), this protein is Oxygen-dependent coproporphyrinogen-III oxidase.